The primary structure comprises 417 residues: Putative competence-damage inducible protein (417 aa).

This sequence belongs to the CinA family.

This Shouchella clausii (strain KSM-K16) (Alkalihalobacillus clausii) protein is Putative competence-damage inducible protein.